A 504-amino-acid polypeptide reads, in one-letter code: E3 ubiquitin-protein ligase dbl4 (504 aa).

The tract at residues 127–338 is TRIAD supradomain; the sequence is HEGTCEICYD…NNWYTCNRYE (212 aa). Residues Cys131, Cys134, Cys147, His149, Cys152, Cys155, Cys173, Cys178, Cys217, Cys222, Cys244, Cys246, Cys251, Cys254, His259, Cys264, Cys291, and Cys294 each coordinate Zn(2+). The RING-type 1 zinc-finger motif lies at 131–178; that stretch reads CEICYDEGCLPFFSAECDHEFCLACYRQYLDSRISEGESVIQCPEESC. The segment at 197-264 adopts an IBR-type zinc-finger fold; that stretch reads DRYHRLLDRS…GHDNHQPTIC (68 aa). The RING-type 2; atypical zinc-finger motif lies at 291-320; that stretch reads CPKCSTTIEKNGGCNHMTCKKCKYEFCWVC. Residue Cys304 is part of the active site. Positions 309, 312, 317, 320, 327, and 334 each coordinate Zn(2+).

This sequence belongs to the RBR family.

It localises to the cytoplasm. Its subcellular location is the nucleus. It carries out the reaction [E2 ubiquitin-conjugating enzyme]-S-ubiquitinyl-L-cysteine + [acceptor protein]-L-lysine = [E2 ubiquitin-conjugating enzyme]-L-cysteine + [acceptor protein]-N(6)-ubiquitinyl-L-lysine.. Its pathway is protein modification; protein ubiquitination. Its function is as follows. Probable ubiquitin-protein ligase involved in the degradation-related ubiquitination of histones. Contributes to the post-translational regulation of histone protein levels by polyubiquitination of excess histones for subsequent degradation. This Schizosaccharomyces pombe (strain 972 / ATCC 24843) (Fission yeast) protein is E3 ubiquitin-protein ligase dbl4.